Reading from the N-terminus, the 359-residue chain is Heme A synthase (359 aa).

Helical transmembrane passes span 23-43 (AVAF…VLGG), 85-105 (YAAL…FFEW), 109-129 (LLGR…WLRG), 137-157 (LKLL…WWMV), 172-192 (LAIH…LAAS), and 212-232 (AGLI…VAGL). A heme-binding site is contributed by H276. 3 helical membrane passes run 278–298 (MVAY…SGTL), 308–328 (IALL…LVLV), and 329–349 (VPLW…GMAV). H337 is a binding site for heme.

Belongs to the COX15/CtaA family. Type 2 subfamily. In terms of assembly, interacts with CtaB. Heme b is required as a cofactor.

It localises to the cell membrane. It catalyses the reaction Fe(II)-heme o + 2 A + H2O = Fe(II)-heme a + 2 AH2. Its pathway is porphyrin-containing compound metabolism; heme A biosynthesis; heme A from heme O: step 1/1. In terms of biological role, catalyzes the conversion of heme O to heme A by two successive hydroxylations of the methyl group at C8. The first hydroxylation forms heme I, the second hydroxylation results in an unstable dihydroxymethyl group, which spontaneously dehydrates, resulting in the formyl group of heme A. The polypeptide is Heme A synthase (Beijerinckia indica subsp. indica (strain ATCC 9039 / DSM 1715 / NCIMB 8712)).